A 308-amino-acid polypeptide reads, in one-letter code: Glutaminase (308 aa).

Substrate-binding residues include serine 68, asparagine 118, glutamate 162, asparagine 169, tyrosine 193, tyrosine 244, and valine 262.

This sequence belongs to the glutaminase family. Homotetramer.

The enzyme catalyses L-glutamine + H2O = L-glutamate + NH4(+). The chain is Glutaminase from Hahella chejuensis (strain KCTC 2396).